The sequence spans 355 residues: Proto-oncogene Wnt-3 (355 aa).

An N-terminal signal peptide occupies residues 1–21; sequence MEPHLLGLLLGLLLGGTRVLA. 11 disulfide bridges follow: cysteine 80-cysteine 91, cysteine 131-cysteine 139, cysteine 141-cysteine 158, cysteine 206-cysteine 220, cysteine 208-cysteine 215, cysteine 284-cysteine 315, cysteine 300-cysteine 310, cysteine 314-cysteine 354, cysteine 330-cysteine 345, cysteine 332-cysteine 342, and cysteine 337-cysteine 338. A glycan (N-linked (GlcNAc...) asparagine) is linked at asparagine 90. Serine 212 carries the O-palmitoleoyl serine; by PORCN lipid modification. N-linked (GlcNAc...) asparagine glycosylation occurs at asparagine 301.

This sequence belongs to the Wnt family. Forms a soluble 1:1 complex with AFM; this prevents oligomerization and is required for prolonged biological activity. The complex with AFM may represent the physiological form in body fluids. Interacts with PORCN. Interacts with WLS. Palmitoleoylation is required for efficient binding to frizzled receptors. Depalmitoleoylation leads to Wnt signaling pathway inhibition.

The protein resides in the secreted. Its subcellular location is the extracellular space. The protein localises to the extracellular matrix. In terms of biological role, ligand for members of the frizzled family of seven transmembrane receptors. Functions in the canonical Wnt signaling pathway that results in activation of transcription factors of the TCF/LEF family. Required for normal gastrulation, formation of the primitive streak, and for the formation of the mesoderm during early embryogenesis. Required for normal formation of the apical ectodermal ridge. Required for normal embryonic development, and especially for limb development. This Homo sapiens (Human) protein is Proto-oncogene Wnt-3 (WNT3).